Reading from the N-terminus, the 115-residue chain is UPF0738 protein SSP1780 (115 aa).

It belongs to the UPF0738 family.

The sequence is that of UPF0738 protein SSP1780 from Staphylococcus saprophyticus subsp. saprophyticus (strain ATCC 15305 / DSM 20229 / NCIMB 8711 / NCTC 7292 / S-41).